The following is a 471-amino-acid chain: Tryptophanase (471 aa).

3 positions are modified to N6-acetyllysine: K5, K115, and K156. The residue at position 270 (K270) is an N6-(pyridoxal phosphate)lysine. K450 is subject to N6-acetyllysine.

Belongs to the beta-eliminating lyase family. Homotetramer. Pyridoxal 5'-phosphate serves as cofactor.

It catalyses the reaction L-tryptophan + H2O = indole + pyruvate + NH4(+). The protein operates within amino-acid degradation; L-tryptophan degradation via pyruvate pathway; indole and pyruvate from L-tryptophan: step 1/1. This is Tryptophanase from Escherichia coli O9:H4 (strain HS).